Consider the following 370-residue polypeptide: Peptidyl-prolyl cis-trans isomerase D (370 aa).

S5 bears the Phosphoserine mark. Residues F19–E183 enclose the PPIase cyclophilin-type domain. K171 is subject to N6-acetyllysine. The chaperone activity stretch occupies residues K185–D215. S198 carries the post-translational modification Phosphoserine. The segment at K214–A370 is interaction with HSP90AB1. 3 TPR repeats span residues S223–S256, L273–N306, and T307–D340.

This sequence belongs to the cyclophilin-type PPIase family. PPIase D subfamily. Identified in ESR1 or NR3C1/GCR steroid receptor-chaperone complexes. Found in HSP90 chaperone complexes with kinase clients LCK or EIF2AK1. Two monomers associate with one HSP90 homodimer. Interacts with HSP90AA1. Interacts with HSP90AB1; PPID and FKBP4 compete for binding to HSP90AB1 and the interaction is mutually exclusive with the PPID:HSPA8 interaction. Interacts with HSPA8; PPID and STIP1 but not FKBP4 compete for binding to HSPA8 and the interaction is mutually exclusive with the PPID:HSP90AB1 interaction. Interacts with S100A1 and S100A2; the interactions dissociate the PPID:HSP90AA1 interaction. Interacts with S100A6. Interacts with MYB, ILF2, XRCC6, RACK1 and RPS3. Interacts with cytoplasmic dynein 1 intermediate chain (DYNC1I1 or DYNC1I2).

It localises to the cytoplasm. Its subcellular location is the nucleus. The protein resides in the nucleolus. It is found in the nucleoplasm. The enzyme catalyses [protein]-peptidylproline (omega=180) = [protein]-peptidylproline (omega=0). With respect to regulation, less sensitive to inhibition by cyclosporin A than is CYP-18. PPIase that catalyzes the cis-trans isomerization of proline imidic peptide bonds in oligopeptides and may therefore assist protein folding. Proposed to act as a co-chaperone in HSP90 complexes such as in unligated steroid receptors heterocomplexes. Different co-chaperones seem to compete for association with HSP90 thus establishing distinct HSP90-co-chaperone-receptor complexes with the potential to exert tissue-specific receptor activity control. May have a preference for estrogen receptor complexes and is not found in glucocorticoid receptor complexes. May be involved in cytoplasmic dynein-dependent movement of the receptor from the cytoplasm to the nucleus. May regulate MYB by inhibiting its DNA-binding activity. Involved in regulation of AHR signaling by promoting the formation of the AHR:ARNT dimer; the function is independent of HSP90 but requires the chaperone activity region. Involved in regulation of UV radiation-induced apoptosis. The chain is Peptidyl-prolyl cis-trans isomerase D from Mus musculus (Mouse).